The primary structure comprises 245 residues: 4-hydroxy-tetrahydrodipicolinate reductase (245 aa).

Residues 8–13, 78–80, and 102–105 each bind NAD(+); these read GSTGKM, GTT, and SANM. The active-site Proton donor/acceptor is H134. H135 lines the (S)-2,3,4,5-tetrahydrodipicolinate pocket. The active-site Proton donor is K138. Position 144 to 145 (144 to 145) interacts with (S)-2,3,4,5-tetrahydrodipicolinate; it reads GT.

The protein belongs to the DapB family.

It localises to the cytoplasm. It catalyses the reaction (S)-2,3,4,5-tetrahydrodipicolinate + NAD(+) + H2O = (2S,4S)-4-hydroxy-2,3,4,5-tetrahydrodipicolinate + NADH + H(+). The enzyme catalyses (S)-2,3,4,5-tetrahydrodipicolinate + NADP(+) + H2O = (2S,4S)-4-hydroxy-2,3,4,5-tetrahydrodipicolinate + NADPH + H(+). It participates in amino-acid biosynthesis; L-lysine biosynthesis via DAP pathway; (S)-tetrahydrodipicolinate from L-aspartate: step 4/4. Catalyzes the conversion of 4-hydroxy-tetrahydrodipicolinate (HTPA) to tetrahydrodipicolinate. The chain is 4-hydroxy-tetrahydrodipicolinate reductase from Rickettsia akari (strain Hartford).